The chain runs to 293 residues: Ribosomal RNA small subunit methyltransferase H (293 aa).

Residues glycine 34–histidine 36, aspartate 54, leucine 86, aspartate 101, and glutamine 108 contribute to the S-adenosyl-L-methionine site.

Belongs to the methyltransferase superfamily. RsmH family.

The protein localises to the cytoplasm. The enzyme catalyses cytidine(1402) in 16S rRNA + S-adenosyl-L-methionine = N(4)-methylcytidine(1402) in 16S rRNA + S-adenosyl-L-homocysteine + H(+). Specifically methylates the N4 position of cytidine in position 1402 (C1402) of 16S rRNA. The sequence is that of Ribosomal RNA small subunit methyltransferase H from Elusimicrobium minutum (strain Pei191).